Consider the following 198-residue polypeptide: ATP-dependent Clp protease proteolytic subunit (198 aa).

The Nucleophile role is filled by serine 98. Histidine 123 is an active-site residue.

This sequence belongs to the peptidase S14 family. As to quaternary structure, fourteen ClpP subunits assemble into 2 heptameric rings which stack back to back to give a disk-like structure with a central cavity, resembling the structure of eukaryotic proteasomes.

It localises to the cytoplasm. The catalysed reaction is Hydrolysis of proteins to small peptides in the presence of ATP and magnesium. alpha-casein is the usual test substrate. In the absence of ATP, only oligopeptides shorter than five residues are hydrolyzed (such as succinyl-Leu-Tyr-|-NHMec, and Leu-Tyr-Leu-|-Tyr-Trp, in which cleavage of the -Tyr-|-Leu- and -Tyr-|-Trp bonds also occurs).. Its function is as follows. Cleaves peptides in various proteins in a process that requires ATP hydrolysis. Has a chymotrypsin-like activity. Plays a major role in the degradation of misfolded proteins. This is ATP-dependent Clp protease proteolytic subunit from Listeria monocytogenes serovar 1/2a (strain ATCC BAA-679 / EGD-e).